Consider the following 387-residue polypeptide: Dynactin subunit 2 (387 aa).

Coiled-coil stretches lie at residues 99–125, 256–282, and 355–387; these read LQRC…DTGR, SQLD…SNAT, and TGVQ…QMIK.

This sequence belongs to the dynactin subunit 2 family. In terms of assembly, subunit of dynactin, a multiprotein complex associated with dynein.

It is found in the cytoplasm. Its subcellular location is the cytoskeleton. The protein localises to the membrane. In terms of biological role, modulates cytoplasmic dynein binding to an organelle, and plays a role in prometaphase chromosome alignment and spindle organization during mitosis. The protein is Dynactin subunit 2 of Anopheles gambiae (African malaria mosquito).